A 326-amino-acid polypeptide reads, in one-letter code: Protoheme IX farnesyltransferase (326 aa).

The next 8 helical transmembrane spans lie at 35–55 (LIPL…GWPL), 60–80 (LICT…LNCL), 106–126 (TAFI…VSGV), 129–149 (LAAG…TALL), 157–177 (IVVG…AATG), 185–205 (WLFA…ALLL), 238–258 (VLLS…YGLM), and 289–309 (WSIL…SALA).

Belongs to the UbiA prenyltransferase family. Protoheme IX farnesyltransferase subfamily.

The protein localises to the cell inner membrane. It catalyses the reaction heme b + (2E,6E)-farnesyl diphosphate + H2O = Fe(II)-heme o + diphosphate. It functions in the pathway porphyrin-containing compound metabolism; heme O biosynthesis; heme O from protoheme: step 1/1. Converts heme B (protoheme IX) to heme O by substitution of the vinyl group on carbon 2 of heme B porphyrin ring with a hydroxyethyl farnesyl side group. This Synechococcus sp. (strain CC9902) protein is Protoheme IX farnesyltransferase.